Here is a 284-residue protein sequence, read N- to C-terminus: 2-dehydro-3-deoxyphosphooctonate aldolase (284 aa).

The protein belongs to the KdsA family.

The protein localises to the cytoplasm. It carries out the reaction D-arabinose 5-phosphate + phosphoenolpyruvate + H2O = 3-deoxy-alpha-D-manno-2-octulosonate-8-phosphate + phosphate. It participates in carbohydrate biosynthesis; 3-deoxy-D-manno-octulosonate biosynthesis; 3-deoxy-D-manno-octulosonate from D-ribulose 5-phosphate: step 2/3. Its pathway is bacterial outer membrane biogenesis; lipopolysaccharide biosynthesis. This chain is 2-dehydro-3-deoxyphosphooctonate aldolase, found in Burkholderia multivorans (strain ATCC 17616 / 249).